Reading from the N-terminus, the 478-residue chain is Alpha-(1,3)-fucosyltransferase FucT (478 aa).

Substrate contacts are provided by residues G94, 186–189 (VASN), R195, 222–225 (VKNK), N240, and 246–250 (YVTEK). The interval 347–353 (DNPFIFC) is important for acceptor specificity. 10 tandem repeats follow at residues 364-370 (DDLRVNY), 371-377 (DDLRVNY), 378-384 (DDLRINY), 385-391 (DDLRVNY), 392-398 (DDLRINY), 399-405 (DDLRVNY), 406-412 (DDLRVNY), 413-419 (DDLRINY), 420-426 (DDLRVNY), and 427-433 (DDLRVNY). The segment at 364–433 (DDLRVNYDDL…VNYDDLRVNY (70 aa)) is 10 X 7 AA tandem repeat of D-D-L-R-[IV]-N-Y. Residues 434-478 (ERLLSKATPLLELSQNTTSKIYRKAYQKSLPLLRAIRRWVKKLGL) form a may be involved in membrane binding region.

Belongs to the glycosyltransferase 10 family. Homodimer.

It localises to the membrane. The protein localises to the cytoplasm. It carries out the reaction a beta-D-galactosyl-(1-&gt;4)-N-acetyl-beta-D-glucosaminyl derivative + GDP-beta-L-fucose = a beta-D-galactosyl-(1-&gt;4)-[alpha-L-fucosyl-(1-&gt;3)]-N-acetyl-beta-D-glucosaminyl derivative + GDP + H(+). It functions in the pathway lipopolysaccharide biosynthesis; LPS oligosaccharide biosynthesis. Functionally, involved in the biosynthesis of the Lewis X (LeX) trisaccharide of the lipopolysaccharide (LPS) O-antigen. Catalyzes the addition of fucose in alpha 1-3 linkage to Gal-beta-1-4-GlcNAc-beta-O-R (LacNAc-R) type II acceptor. This is Alpha-(1,3)-fucosyltransferase FucT from Helicobacter pylori (Campylobacter pylori).